The primary structure comprises 342 residues: MAEHDYHEDYGLNSFNDSSQEEHQDFLQFRKVFLPCMYLVVFVCGLVGNSLVLVISIFYHKLQSLTDVFLVNLPLADLVFVCTLPFWAYAGIHEWIFGQVMCKTLLGVYTINFYTSMLILTCITVDRFIVVVKATKAYNQQAKRMTWGKVICLLIWVISLLVSLPQIIYGNVFNLDKLICGYHDKEISTVVLATQMTLGFFLPLLAMIVCYSVIIKTLLHAGGFQKHRSLKIIFLVMAVFLLTQTPFNLVKLIRSTHWEYYAMTSFHYTIIVTEAIAYLRACLNPVLYAFVSLKFRKNFWKLVKDIGCLPYLGVSHQWKSSEDNSKTFSASHNVEATSMFQL.

Residues 1-32 (MAEHDYHEDYGLNSFNDSSQEEHQDFLQFRKV) are Extracellular-facing. A glycan (N-linked (GlcNAc...) asparagine) is linked at Asn-16. Residues 33–59 (FLPCMYLVVFVCGLVGNSLVLVISIFY) form a helical membrane-spanning segment. The Cytoplasmic portion of the chain corresponds to 60-68 (HKLQSLTDV). Residues 69–89 (FLVNLPLADLVFVCTLPFWAY) traverse the membrane as a helical segment. The Extracellular portion of the chain corresponds to 90–103 (AGIHEWIFGQVMCK). Cysteines 102 and 180 form a disulfide. Residues 104-125 (TLLGVYTINFYTSMLILTCITV) form a helical membrane-spanning segment. Residues 126–143 (DRFIVVVKATKAYNQQAK) are Cytoplasmic-facing. Residues 144-164 (RMTWGKVICLLIWVISLLVSL) traverse the membrane as a helical segment. Topologically, residues 165-187 (PQIIYGNVFNLDKLICGYHDKEI) are extracellular. The chain crosses the membrane as a helical span at residues 188-215 (STVVLATQMTLGFFLPLLAMIVCYSVII). At 216 to 231 (KTLLHAGGFQKHRSLK) the chain is on the cytoplasmic side. The chain crosses the membrane as a helical span at residues 232–259 (IIFLVMAVFLLTQTPFNLVKLIRSTHWE). Residues 260–275 (YYAMTSFHYTIIVTEA) are Extracellular-facing. A helical transmembrane segment spans residues 276 to 293 (IAYLRACLNPVLYAFVSL). Residues 294 to 342 (KFRKNFWKLVKDIGCLPYLGVSHQWKSSEDNSKTFSASHNVEATSMFQL) are Cytoplasmic-facing.

Belongs to the G-protein coupled receptor 1 family.

The protein localises to the cell membrane. Receptor for the C-X-C chemokine CXCL16. Used as a coreceptor by SIVs and by strains of HIV-2 and m-tropic HIV-1. The protein is C-X-C chemokine receptor type 6 (CXCR6) of Macaca nemestrina (Pig-tailed macaque).